A 676-amino-acid polypeptide reads, in one-letter code: MDKYDDLGLEASKFIEDLNMYEASKDGLFRVDKGAGNNPEFEETRRVFATKMAKIHLQQQQQQLLQEETLPRGSRGPVNGGGRLGPQARWEVVGSKLTVDGAAKPPLAASTGAPGAVTTLAAGQPPYPPQEQRSRPYLHGTRHGSQDCGSRESLATSEMSAFHQPGPCEDPSCLTHGDYYDNLSLASPKWGDKPGVSPSIGLSVGSGWPSSPGSDPPLPKPCGDHPLNHRQLSLSSSRSSEGSLGGQNSGIGGRSSEKPTGLWSTASSQRVSPGLPSPNLENGAPAVGPVQPRTPSVSAPLALSCPRQGGLPRSNSGLGGEVSGVMSKPNVDPQPWFQDGPKSYLSSSAPSSSPAGLDGSQQGAVPGLGPKPGCTDLGTGPKLSPTSLVHPVMSTLPELSCKEGPLGWSSDGSLGSVLLDSPSSPRVRLPCQPLVPGPELRPSAAELKLEALTQRLEREMDAHPKADYFGACVKCSKGVFGAGQACQAMGNLYHDTCFTCAACSRKLRGKAFYFVNGKVFCEEDFLYSGFQQSADRCFLCGHLIMDMILQALGKSYHPGCFRCVICNECLDGVPFTVDSENKIYCVRDYHKVLAPKCAACGLPILPPEGSDETIRVVSMDRDYHVECYHCEDCGLELNDEDGHRCYPLEDHLFCHSCHVKRLEKRPSSTALHQHHF.

Residues 54–134 are mediates nuclear export; sequence KIHLQQQQQQ…PPYPPQEQRS (81 aa). Disordered regions lie at residues 104–163 and 189–389; these read KPPL…SAFH and KWGD…TSLV. Serine 145 carries the post-translational modification Phosphoserine. Positions 186–260 are interaction with EGLN1/PHD2; it reads ASPKWGDKPG…IGGRSSEKPT (75 aa). Low complexity-rich tracts occupy residues 201–213 and 232–242; these read GLSV…SSPG and LSLSSSRSSEG. 2 positions are modified to phosphoserine: serine 233 and serine 239. Positions 243–253 are enriched in gly residues; the sequence is SLGGQNSGIGG. Residues 262–271 are compositionally biased toward polar residues; that stretch reads LWSTASSQRV. Phosphoserine occurs at positions 272, 277, 304, and 316. The span at 343–360 shows a compositional bias: low complexity; sequence SYLSSSAPSSSPAGLDGS. The segment at 404-442 is interaction with RB1; sequence GPLGWSSDGSLGSVLLDSPSSPRVRLPCQPLVPGPELRP. Residues serine 421 and serine 424 each carry the phosphoserine modification. LIM zinc-binding domains lie at 470–531, 535–595, and 595–664; these read GACV…SGFQ, DRCF…VLAP, and PKCA…RLEK. A necessary for nuclear localization region spans residues 472 to 676; the sequence is CVKCSKGVFG…SSTALHQHHF (205 aa).

It belongs to the zyxin/ajuba family. In terms of assembly, interacts (via LIM domains) with TRAF6. Found in a complex with TRAF6, PRKCZ and SQSTM1. Interacts (via LIM domains) SNAI2/SLUG (via SNAG domain) and SCRT1 (via SNAG domain). Interacts with SQSTM1 and RB1. Found in a complex composed of LIMD1, VHL, EGLN1/PHD2, ELOB and CUL2. Interacts with EIF4E, AGO1, AGO2, DCP2, DDX6, LATS1, LATS2, EGLN1/PHD2, EGLN2/PHD1 and EGLN3/PHD3. Interacts (via LIM zinc-binding 2) with isoform 1 and isoform 3 of VHL. Interacts (via LIM domains) with SNAI1 (via SNAG domain). In terms of processing, phosphorylated during mitosis. Expressed in normal and breast cancer tissues (at protein level). Ubiquitous.

It localises to the cytoplasm. It is found in the nucleus. The protein localises to the P-body. The protein resides in the cell junction. Its subcellular location is the adherens junction. It localises to the focal adhesion. Adapter or scaffold protein which participates in the assembly of numerous protein complexes and is involved in several cellular processes such as cell fate determination, cytoskeletal organization, repression of gene transcription, cell-cell adhesion, cell differentiation, proliferation and migration. Positively regulates microRNA (miRNA)-mediated gene silencing and is essential for P-body formation and integrity. Acts as a hypoxic regulator by bridging an association between the prolyl hydroxylases and VHL enabling efficient degradation of HIF1A. Acts as a transcriptional corepressor for SNAI1- and SNAI2/SLUG-dependent repression of E-cadherin transcription. Negatively regulates the Hippo signaling pathway and antagonizes phosphorylation of YAP1. Inhibits E2F-mediated transcription, and suppresses the expression of the majority of genes with E2F1-responsive elements. Regulates osteoblast development, function, differentiation and stress osteoclastogenesis. Enhances the ability of TRAF6 to activate adapter protein complex 1 (AP-1) and negatively regulates the canonical Wnt receptor signaling pathway in osteoblasts. May act as a tumor suppressor by inhibiting cell proliferation. The sequence is that of LIM domain-containing protein 1 (LIMD1) from Homo sapiens (Human).